Here is a 1929-residue protein sequence, read N- to C-terminus: Intraflagellar transport protein 140 (1929 aa).

WD repeat units follow at residues 76-116 and 119-158; these read QVQV…PSYK and LHQEELCLIKWLSHGRILVTCDVSGQVILYKFSTDTYSFE. The segment at 774 to 795 is disordered; sequence LSTPDTGSPAVEAEESPQRQTR. LRR repeat units lie at residues 957 to 980, 1019 to 1044, and 1510 to 1532; these read STSLNLLFVGSSMLFALKTGTFTK, ISLLQSIYISSEQRAKVPLLVQSLAE, and AQSLELCIKSNRMKELSNLLADI.

Its subcellular location is the cell projection. The protein resides in the cilium. It is found in the flagellum. It localises to the cytoplasm. The protein localises to the cytoskeleton. Its subcellular location is the flagellum axoneme. The protein resides in the flagellum basal body. Component of the intraflagellar transport complex A (IFT-A) involved in flagellar assembly. The protein is Intraflagellar transport protein 140 of Giardia intestinalis (strain ATCC 50803 / WB clone C6) (Giardia lamblia).